The primary structure comprises 212 residues: Ras-related protein Rab-2A (212 aa).

Ala2 is subject to N-acetylalanine. The required for interaction with PRKCI stretch occupies residues 2–19 (AYAYLFKYIIIGDTGVGK). The GTP site is built by Gly16, Val17, Gly18, Lys19, Ser20, Cys21, and Thr38. Mg(2+) is bound at residue Ser20. A Switch 1 motif is present at residues 37–42 (LTIGVE). Mg(2+)-binding residues include Thr38 and Asp61. The short motif at 63–72 (AGQESFRSIT) is the Switch 2 element. GTP-binding residues include Gly64, Asn119, Lys120, Asp122, Ala150, and Lys151. Residues Cys211 and Cys212 are each lipidated (S-geranylgeranyl cysteine).

It belongs to the small GTPase superfamily. Rab family. Interacts with PRKCI. Interacts with TRIP11. Interacts (in GTP-bound form) with GARIN1B. Interacts (GTP-bound) with HOPS complex component VPS39; interaction contributes to obtaining a functional HOPS complex that promotes autophagosome-lysosome membrane fusion driven by STX17-SNAP29-VAMP8. May interact with VPS41. Mg(2+) serves as cofactor. Post-translationally, prenylated. Prenylation is required for association with cellular membranes.

The protein resides in the endoplasmic reticulum-Golgi intermediate compartment membrane. Its subcellular location is the melanosome. It is found in the endoplasmic reticulum membrane. It localises to the golgi apparatus membrane. The protein localises to the cytoplasmic vesicle. The protein resides in the secretory vesicle. Its subcellular location is the acrosome. It is found in the autophagosome membrane. The catalysed reaction is GTP + H2O = GDP + phosphate + H(+). Its activity is regulated as follows. Regulated by guanine nucleotide exchange factors (GEFs) which promote the exchange of bound GDP for free GTP, GTPase activating proteins (GAPs) which increase the GTP hydrolysis activity, and GDP dissociation inhibitors (GDIs) which inhibit the dissociation of the nucleotide from the GTPase. Its function is as follows. The small GTPases Rab are key regulators of intracellular membrane trafficking, from the formation of transport vesicles to their fusion with membranes. Rabs cycle between active GTP-bound and inactive GDP-bound states. In their active state, drive transport of vesicular carriers from donor organelles to acceptor organelles to regulate the membrane traffic that maintains organelle identity and morphology. RAB2A regulates autophagy by promoting autophagosome-lysosome fusion via recruitment of the HOPS endosomal tethering complex; this process involves autophagosomal RAB2A and lysosomal RAB39A recruitment of HOPS subcomplexes VPS39-VPS11 and VPS41-VPS16-VPS18-VPS33A, respectively, which assemble into a functional complex to mediate membrane tethering and SNAREs-driven membrane fusion. Required for protein transport from the endoplasmic reticulum to the Golgi complex. Regulates the compacted morphology of the Golgi. Together with RAB2B, redundantly required for efficient autophagic flux. The chain is Ras-related protein Rab-2A (RAB2A) from Canis lupus familiaris (Dog).